The sequence spans 471 residues: 1,3-beta-glucanosyltransferase GAS4 (471 aa).

The signal sequence occupies residues 1-21; the sequence is MMVFSSTFIFLILELVVLCEA. Residues Cys-70 and Cys-99 are joined by a disulfide bond. Residue Tyr-88 participates in (1,3-beta-D-glucosyl)n binding. The N-linked (GlcNAc...) asparagine glycan is linked to Asn-151. Residues Asn-160, Glu-161, Asp-203, and Arg-208 each coordinate (1,3-beta-D-glucosyl)n. Glu-161 functions as the Proton donor in the catalytic mechanism. 2 disulfides stabilise this stretch: Cys-217-Cys-354 and Cys-238-Cys-269. The active-site Nucleophile is the Glu-266. Tyr-298 is a binding site for (1,3-beta-D-glucosyl)n. Asn-398 carries N-linked (GlcNAc...) asparagine glycosylation. Asn-447 is lipidated: GPI-anchor amidated asparagine. A propeptide spans 448 to 471 (removed in mature form); the sequence is SASISGPLLPLGLCLLFFTFSLFF.

The protein belongs to the glycosyl hydrolase 72 family.

The protein localises to the cell membrane. In terms of biological role, splits internally a 1,3-beta-glucan molecule and transfers the newly generated reducing end (the donor) to the non-reducing end of another 1,3-beta-glucan molecule (the acceptor) forming a 1,3-beta linkage, resulting in the elongation of 1,3-beta-glucan chains in the cell wall. Involved in spore wall assembly. The polypeptide is 1,3-beta-glucanosyltransferase GAS4 (GAS4) (Saccharomyces cerevisiae (strain ATCC 204508 / S288c) (Baker's yeast)).